Here is a 1040-residue protein sequence, read N- to C-terminus: Multidrug resistance protein MdtB (1040 aa).

12 helical membrane-spanning segments follow: residues 16–36 (FIMRPVATTLLMVAILLAGII), 347–367 (LMMAIALVVMIIYLFLRNIPA), 369–389 (IIPGVAVPLSLIGTFAVMVFL), 396–416 (LTLMALTIATGFVVDDAIVVI), 440–460 (IGFTIISLTFSLIAVLIPLLF), 472–492 (FAITLAVAILISAVVSLTLTP), 537–557 (WLTLSVALSTLLLSVLLWVFI), 863–883 (LGSTVWLIVAAVVAMYIVLGI), 888–908 (FIHPITILSTLPTAGVGALLA), 911–931 (IAGSELDVIAIIGIILLIGIV), 968–988 (ILMTTLAALLGALPLMLSTGV), and 998–1018 (IGMVGGLIVSQVLTLFTTPVI).

This sequence belongs to the resistance-nodulation-cell division (RND) (TC 2.A.6) family. MdtB subfamily. As to quaternary structure, part of a tripartite efflux system composed of MdtA, MdtB and MdtC. MdtB forms a heteromultimer with MdtC.

The protein resides in the cell inner membrane. The MdtABC tripartite complex confers resistance against novobiocin and deoxycholate. The chain is Multidrug resistance protein MdtB from Escherichia coli O7:K1 (strain IAI39 / ExPEC).